Reading from the N-terminus, the 867-residue chain is MCDIDLKTCEKSSKYKKKDIVDLGKKCGVDPYLPNGREKTRQVICTEIVNQYSTNPPSSSSESDDDEDMGKQDQDPICGISEKECNKLDNVNLLALGEYCGVDIYTPEGNLKTSKTICKSVSLKQSSPKAQKSPNKNDLINMDPANLKKLAKKLDIDWKKKDIKELQYLIAKKLNSIKSVSPSRSPSPRRSRSPSPNIQNMKKKELKALAKALGASDKKLDKMDKNQLIEYILSRKKSPSPVRKSRSPSLRQRSRSPGRSRSNSPVRPKYRAADLLGKKVVELKELAKMEGLKKWKDKTPSKMLKQDLVDFLLHVGGGGQLPKTPSPVKPSASPKTRAELALLKVPELKAMALSYGLKNFKDKTPSQLRKNDFIDFIILSTQKSQSPPPSIRSKPRSSSPKYKTKDLVTTDESDGEIVVKKITRKPKSPRRSPPASVRRSRTPSVPKSPSARPRSKSPSVRAEITDDEGETPPSSVRPKSPSVRPKSPSVRPRSKSPSVRPKSPSARPRSKSPSVRSKSPSVRPKSPSVRPKSPSVRPRSKSPSVRPKSPSVRPPPPDPSNSPSITVDPSVTPPSSVKIKKRPELPEYKGGNADRDLEILARRRGYKVIPVKGDGNCLFRAVGKSLRLNQNIKYSHEDLRAQVVTYLTSHKEFLEPYLEYVTESGDTTPQEYAKNVERYIKNISKPGTWGDFICLRVLSEILKVKFNLLILNTRNFQVISNNDTFKPLIPLGFIDDYHYTALTPLYAEPIAVLENETPTPSIAPSIRPPPSIIPSIAPSVRPSIAPSVRPSIVPATPSIVPSLKPSVVPKLTPSIAPKIPPPVFGPVKPLSSTRELLEEADKVHPYVREDISQLARAEEQILVSLGM.

Disordered stretches follow at residues V49–D73, I177–K204, Y231–R271, and L379–G591. 2 stretches are compositionally biased toward basic residues: residues S234–G258 and K421–R430. Composition is skewed to low complexity over residues P433–A462 and P472–S551. Positions I565–S575 are enriched in polar residues. Over residues R582–G591 the composition is skewed to basic and acidic residues. The OTU domain maps to Y606–L745. Residue D614 is part of the active site. C617 functions as the Nucleophile in the catalytic mechanism. H738 is an active-site residue.

It carries out the reaction Thiol-dependent hydrolysis of ester, thioester, amide, peptide and isopeptide bonds formed by the C-terminal Gly of ubiquitin (a 76-residue protein attached to proteins as an intracellular targeting signal).. Its function is as follows. Hydrolase that can remove conjugated ubiquitin from proteins and may therefore play an important regulatory role at the level of protein turnover by preventing degradation. May be involved in TIV genomic DNA packaging in a manner related to the Gag polyproteins of the mammalian viruses. In Tipula iridescent virus (TIV), this protein is Putative ubiquitin thioesterase L96.